The sequence spans 388 residues: Probable proton-coupled zinc antiporter SLC30A3 (388 aa).

Residues 1 to 46 form a disordered region; that stretch reads MEPSPAAGGLETTRLVSPRDRGGAGGSLRLKSLFTEPSEPLPEESK. At 1–75 the chain is on the cytoplasmic side; that stretch reads MEPSPAAGGL…TPERLHARRQ (75 aa). A helical transmembrane segment spans residues 76–96; the sequence is LYAACAVCFVFMAGEVVGGYL. The Lumenal portion of the chain corresponds to 97–105; that stretch reads AHSLAIMTD. Residues 106–126 form a helical membrane-spanning segment; sequence AAHLLADVGSMMGSLFSLWLS. Zn(2+) is bound by residues His108 and Asp112. Residues 127–145 lie on the Cytoplasmic side of the membrane; that stretch reads TRPATRTMTFGWHRSETLG. The chain crosses the membrane as a helical span at residues 146–166; the sequence is ALASVVSLWMVTGILLYLAFV. Topologically, residues 167-177 are lumenal; the sequence is RLLHSDYHIEG. Residues 178–198 traverse the membrane as a helical segment; that stretch reads GAMLLTASIAVCANLLMAFVL. Over 199–235 the chain is Cytoplasmic; that stretch reads HQAGPPHSHGSRGAEYAPLEEGPEEPLPLGNTSVRAA. Residues 236-256 form a helical membrane-spanning segment; it reads FVHVLGDLLQSFGVLAASILI. Zn(2+) is bound by residues His238 and Asp242. Residues 257–264 are Lumenal-facing; that stretch reads YFKPQYKA. A helical transmembrane segment spans residues 265–285; it reads ADPISTFLFSICALGSTAPTL. At 286 to 388 the chain is on the cytoplasmic side; the sequence is RDVLRILMEG…CLRCQEPPQA (103 aa). Tyr357 participates in a covalent cross-link: Dityrosine (Tyr-Tyr) (interchain with Y-372). A Dityrosine (Tyr-Tyr) (interchain with Y-357) cross-link involves residue Tyr372.

It belongs to the cation diffusion facilitator (CDF) transporter (TC 2.A.4) family. SLC30A subfamily. Homodimer; dityrosine-linked. Homodimerization seems specific of the human protein and enhances the zinc transport efficiency. Interacts with TMEM163. Post-translationally, homodimerization through dityrosine bonds is stimulated by oxidative stress.

The protein resides in the cytoplasmic vesicle. Its subcellular location is the secretory vesicle. It localises to the synaptic vesicle membrane. It is found in the synapse. The protein localises to the synaptosome. The protein resides in the late endosome membrane. Its subcellular location is the lysosome membrane. It carries out the reaction Zn(2+)(in) + 2 H(+)(out) = Zn(2+)(out) + 2 H(+)(in). Probable proton-coupled zinc ion antiporter mediating the import of zinc from cytoplasm into synaptic vesicles and participating to cellular zinc ion homeostasis in the brain. The polypeptide is Probable proton-coupled zinc antiporter SLC30A3 (Homo sapiens (Human)).